The sequence spans 856 residues: MAEGFVANGQWIGPEEAEELVDFEIATQMNEEGPLNPGINPFRVPGITKQEKQEYCSTMQPKLQALRNEIQEVKLEEGNAGKFRRARFLRYSDETILSLIYLFIGYFRYLVDRKRFGSLRHDIDIEAPQEECYNNKEKGMTENIKYGKRCLVGTAALYLILAIGIIIIIRTTDAQVVWRLPPLVVPVEESEIIFWDCWAPEEPACQDFLGAMIHLKASTNISNTEGPTLGNWAREIWATLFKKATRQCRRGRIWKRWNETITGPIGCANNTCYNISVIVPDYQCYIDRVDTWLQGKVNISLCLTGGKMLYNKETKQLSYCTDPLQIPLINYTFGPNQTCMWNISQIQDPEIPKCGWWNQQAYYNNCKWERTDVKFQCQRTQSQPGSWIRAISSWKQGNRWEWRPDFESERVKVSLQCNSTRNLTFAMRSSGDYGEITGAWIEFGCHRNKSIRHNAARFRIRCRWNEGDNNSLIDTCGETQNVSGANPVDCTMYANKMYNCSLQDGFTMKVDDLIMHFNMTKAVEMYNIAGNWSCMSDLPTEWGYMNCNCTNDTSNNNTRKMKCPKENGILRNWYNPVAGLRQSLEKYQVVKQPDYLLVPEEVMEYKPRRKRAAIHVMLALATVLSMAGAGTGATAIGMVTQYHQVLATQQEAIEKVTEALKITNLRLVTLEHQVLVIGLKVEAMEKFLYTAFAMQELGCNQNQFFCKVPPELWRRYNMTINQTIWNHGNITLGEWYNQTKDLQKKFYGIIMDIEQNNVQGKKGLQQLQKWEDWVGWIGNIPQYLKGLLGSIVGIGLGILLLILCLPTLVDCIRNCIHKILGYTVIAMPEVDGEEIQPQMELRRNGRQCGMSEKEEE.

The Extracellular segment spans residues 1–785 (MAEGFVANGQ…WIGNIPQYLK (785 aa)). 19 N-linked (GlcNAc...) asparagine; by host glycosylation sites follow: N220, N258, N269, N274, N298, N330, N336, N342, N418, N422, N448, N469, N481, N499, N518, N531, N548, N551, and N556. The fusion peptide stretch occupies residues 616-636 (VMLALATVLSMAGAGTGATAI). Residues 643–693 (HQVLATQQEAIEKVTEALKITNLRLVTLEHQVLVIGLKVEAMEKFLYTAFA) adopt a coiled-coil conformation. Residues 662–680 (ITNLRLVTLEHQVLVIGLK) form an immunosuppression region. N717, N721, N729, and N737 each carry an N-linked (GlcNAc...) asparagine; by host glycan. The stretch at 736–772 (YNQTKDLQKKFYGIIMDIEQNNVQGKKGLQQLQKWED) forms a coiled coil. A helical membrane pass occupies residues 786–806 (GLLGSIVGIGLGILLLILCLP). Residues 807-856 (TLVDCIRNCIHKILGYTVIAMPEVDGEEIQPQMELRRNGRQCGMSEKEEE) are Cytoplasmic-facing.

As to quaternary structure, the mature envelope protein (Env) consists of a trimer of SU-TM heterodimers attached by noncovalent interactions or by a labile interchain disulfide bond. Post-translationally, specific enzymatic cleavages in vivo yield mature proteins. Envelope glycoproteins are synthesized as an inactive precursor that is N-glycosylated and processed likely by host cell furin or by a furin-like protease in the Golgi to yield the mature SU and TM proteins. The cleavage site between SU and TM requires the minimal sequence [KR]-X-[KR]-R.

Its subcellular location is the virion membrane. It is found in the host cell membrane. Its function is as follows. The surface protein (SU) attaches the virus to the host cell by binding to its receptor. This interaction triggers the refolding of the transmembrane protein (TM) and is thought to activate its fusogenic potential by unmasking its fusion peptide. Fusion occurs at the host cell plasma membrane. Functionally, the transmembrane protein (TM) acts as a class I viral fusion protein. Under the current model, the protein has at least 3 conformational states: pre-fusion native state, pre-hairpin intermediate state, and post-fusion hairpin state. During viral and target cell membrane fusion, the coiled coil regions (heptad repeats) assume a trimer-of-hairpins structure, positioning the fusion peptide in close proximity to the C-terminal region of the ectodomain. The formation of this structure appears to drive apposition and subsequent fusion of viral and target cell membranes. Membranes fusion leads to delivery of the nucleocapsid into the cytoplasm. The protein is Envelope glycoprotein gp150 (env) of Feline immunodeficiency virus (strain UT-113) (FIV).